Consider the following 26-residue polypeptide: MIXAIVTDIEGTTSDTXFVXNVLFPY.

It belongs to the HAD-like hydrolase superfamily. MasA/MtnC family. In terms of assembly, monomer. It depends on Mg(2+) as a cofactor.

The catalysed reaction is 5-methylsulfanyl-2,3-dioxopentyl phosphate + H2O = 1,2-dihydroxy-5-(methylsulfanyl)pent-1-en-3-one + phosphate. Its pathway is amino-acid biosynthesis; L-methionine biosynthesis via salvage pathway; L-methionine from S-methyl-5-thio-alpha-D-ribose 1-phosphate: step 3/6. The protein operates within amino-acid biosynthesis; L-methionine biosynthesis via salvage pathway; L-methionine from S-methyl-5-thio-alpha-D-ribose 1-phosphate: step 4/6. Its function is as follows. Bifunctional enzyme that catalyzes the enolization of 2,3-diketo-5-methylthiopentyl-1-phosphate (DK-MTP-1-P) into the intermediate 2-hydroxy-3-keto-5-methylthiopentenyl-1-phosphate (HK-MTPenyl-1-P), which is then dephosphorylated to form the acireductone 1,2-dihydroxy-3-keto-5-methylthiopentene (DHK-MTPene). The protein is Enolase-phosphatase E1 (mtnC) of Klebsiella aerogenes (Enterobacter aerogenes).